The chain runs to 342 residues: Isopentenyl-diphosphate delta-isomerase (342 aa).

11–12 lines the substrate pocket; it reads RK. FMN-binding positions include S68, 69–71, S99, and N127; that span reads SMT. Residue 99–101 coordinates substrate; it reads SMR. E163 lines the Mg(2+) pocket. Residues K194, T224, and 295 to 296 contribute to the FMN site; that span reads AG.

It belongs to the IPP isomerase type 2 family. As to quaternary structure, homooctamer. Dimer of tetramers. The cofactor is FMN. Requires NADPH as cofactor. Mg(2+) serves as cofactor.

The protein resides in the cytoplasm. It catalyses the reaction isopentenyl diphosphate = dimethylallyl diphosphate. Its function is as follows. Involved in the biosynthesis of isoprenoids. Catalyzes the 1,3-allylic rearrangement of the homoallylic substrate isopentenyl (IPP) to its allylic isomer, dimethylallyl diphosphate (DMAPP). The sequence is that of Isopentenyl-diphosphate delta-isomerase from Rickettsia prowazekii (strain Madrid E).